We begin with the raw amino-acid sequence, 124 residues long: Small ribosomal subunit protein uS13 (124 aa).

The segment at 94–124 is disordered; it reads RGMPVRGQRTKTNARTRKGPKRTIAGKKKAR.

This sequence belongs to the universal ribosomal protein uS13 family. Part of the 30S ribosomal subunit. Forms a loose heterodimer with protein S19. Forms two bridges to the 50S subunit in the 70S ribosome.

Located at the top of the head of the 30S subunit, it contacts several helices of the 16S rRNA. In the 70S ribosome it contacts the 23S rRNA (bridge B1a) and protein L5 of the 50S subunit (bridge B1b), connecting the 2 subunits; these bridges are implicated in subunit movement. Contacts the tRNAs in the A and P-sites. This is Small ribosomal subunit protein uS13 from Mycobacterium tuberculosis (strain ATCC 25177 / H37Ra).